Consider the following 725-residue polypeptide: N-alpha-acetyltransferase 35, NatC auxiliary subunit (725 aa).

Serine 187 carries the post-translational modification Phosphoserine. The segment at glutamate 548 to serine 573 is disordered. The segment covering arginine 558–proline 571 has biased composition (basic residues).

It belongs to the MAK10 family. As to quaternary structure, component of the N-terminal acetyltransferase C (NatC) complex, which is composed of NAA35, NAA38 and NAA30.

The protein localises to the cytoplasm. Auxillary component of the N-terminal acetyltransferase C (NatC) complex which catalyzes acetylation of N-terminal methionine residues. N-terminal acetylation protects proteins from ubiquitination and degradation by the N-end rule pathway. Involved in regulation of apoptosis and proliferation of smooth muscle cells. In Homo sapiens (Human), this protein is N-alpha-acetyltransferase 35, NatC auxiliary subunit (NAA35).